A 417-amino-acid chain; its full sequence is GTP-binding protein YPT11 (417 aa).

The disordered stretch occupies residues 1–34 (MSQRKRYSLNVVTSPSIPSPTPSAPIRTNESNWE). GTP-binding positions include 97-104 (GDANVGKT), 228-232 (DTAGQ), and 292-295 (NKID). 2 S-geranylgeranyl cysteine lipidation sites follow: C415 and C416.

It belongs to the small GTPase superfamily. Rab family. As to quaternary structure, interacts with MYO2 (via C-terminal tail domain). Interacts with YIF1, YIP3, YIP4 and YIP5.

It is found in the endoplasmic reticulum membrane. The protein resides in the bud tip. It localises to the bud neck. Involved in the positive control of both endoplasmic reticulum (ER) and mitochondrion inheritance during cell divison. Required for the MYO2-dependent retention of newly inherited mitochondria at the bud tip in developing daughter cells. This chain is GTP-binding protein YPT11 (YPT11), found in Saccharomyces cerevisiae (strain RM11-1a) (Baker's yeast).